Consider the following 288-residue polypeptide: Coenzyme gamma-F420-2:alpha-L-glutamate ligase (288 aa).

Residues 101 to 287 (IKLLAKNKIK…IAEALVRYAK (187 aa)) enclose the ATP-grasp domain. ATP is bound by residues K139, 173–186 (QEFIDFKENDLYRD), and R202. Mn(2+)-binding residues include D245, E257, and N259.

It belongs to the RimK family. CofF subfamily. As to quaternary structure, monomer. The cofactor is Mn(2+).

It carries out the reaction oxidized coenzyme F420-2 + L-glutamate + ATP = oxidized coenzyme alpha-F420-3 + ADP + phosphate + H(+). It participates in cofactor biosynthesis; coenzyme F420 biosynthesis. With respect to regulation, inhibited by KCl. In terms of biological role, catalyzes the ATP-dependent addition of one alpha-linked L-glutamate molecule to coenzyme gamma-F420-2, producing alpha-F420-3, the major form of coenzyme F420 found in M.jannaschii. Thus, caps the gamma-polyglutamate tail of coenzyme F420 with a terminal alpha-linked glutamate. Prefers ATP to other purine nucleotide triphosphates; GTP gives about 25% of the activity observed with ATP. Cannot catalyze the addition of the following amino acids or analogs: D-glutamate, beta-glutamate, L-aspartate, L-glutamine, L-alpha-aminoadipate, or D,L-2-amino-4-phosphono-butyrate. The sequence is that of Coenzyme gamma-F420-2:alpha-L-glutamate ligase (cofF) from Methanocaldococcus jannaschii (strain ATCC 43067 / DSM 2661 / JAL-1 / JCM 10045 / NBRC 100440) (Methanococcus jannaschii).